The following is a 602-amino-acid chain: Gag-Pro polyprotein (602 aa).

Residue Gly2 is the site of N-myristoyl glycine; by host attachment. Positions Pro94–Pro97 match the PTAP/PSAP motif motif. The disordered stretch occupies residues Pro94 to Ala121. Residues Pro97 to Ala121 show a composition bias toward pro residues. The short motif at Pro124–Tyr127 is the PPXY motif element. 2 consecutive CCHC-type zinc fingers follow at residues Gln361–Gln378 and Gly384–Gln401. The interval Cys399–Glu425 is disordered. Residues Thr473–Ala551 form the Peptidase A2 domain. The active-site Protease; shared with dimeric partner is the Asp478. A disordered region spans residues Glu582 to Pro602.

In terms of assembly, homodimer; the homodimers are part of the immature particles. Interacts with human TSG101 and NEDD4; these interactions are essential for budding and release of viral particles. As to quaternary structure, homodimer; further assembles as homohexamers. Specific enzymatic cleavages by the viral protease yield mature proteins. The polyprotein is cleaved during and after budding, this process is termed maturation. The protease is autoproteolytically processed at its N- and C-termini. In terms of processing, phosphorylation of the matrix protein p19 by MAPK1 seems to play a role in budding. Post-translationally, myristoylated. Myristoylation of the matrix (MA) domain mediates the transport and binding of Gag polyproteins to the host plasma membrane and is required for the assembly of viral particles.

It is found in the virion. Its function is as follows. The matrix domain targets Gag, Gag-Pro and Gag-Pro-Pol polyproteins to the plasma membrane via a multipartite membrane binding signal, that includes its myristoylated N-terminus. Functionally, matrix protein. In terms of biological role, forms the spherical core of the virus that encapsulates the genomic RNA-nucleocapsid complex. Binds strongly to viral nucleic acids and promote their aggregation. Also destabilizes the nucleic acids duplexes via highly structured zinc-binding motifs. Its function is as follows. The aspartyl protease mediates proteolytic cleavages of Gag and Gag-Pol polyproteins during or shortly after the release of the virion from the plasma membrane. Cleavages take place as an ordered, step-wise cascade to yield mature proteins. This process is called maturation. Displays maximal activity during the budding process just prior to particle release from the cell (Potential). Cleaves the translation initiation factor eIF4G leading to the inhibition of host cap-dependent translation. The chain is Gag-Pro polyprotein (gag-pro) from Homo sapiens (Human).